We begin with the raw amino-acid sequence, 60 residues long: Large ribosomal subunit protein uL30 (60 aa).

This sequence belongs to the universal ribosomal protein uL30 family. Part of the 50S ribosomal subunit.

This Streptomyces avermitilis (strain ATCC 31267 / DSM 46492 / JCM 5070 / NBRC 14893 / NCIMB 12804 / NRRL 8165 / MA-4680) protein is Large ribosomal subunit protein uL30.